The following is a 96-amino-acid chain: Small ribosomal subunit protein bS18c (96 aa).

This sequence belongs to the bacterial ribosomal protein bS18 family. In terms of assembly, part of the 30S ribosomal subunit.

The protein resides in the plastid. The protein localises to the chloroplast. The polypeptide is Small ribosomal subunit protein bS18c (rps18) (Pinus thunbergii (Japanese black pine)).